The chain runs to 302 residues: L-glutamate/L-aspartate-binding protein (302 aa).

The N-terminal stretch at 1–23 is a signal peptide; the sequence is MRIAPSLLSTAIVAALLSAPVVA.

The protein belongs to the bacterial solute-binding protein 3 family.

It localises to the periplasm. In terms of biological role, binds L-glutamate and L-aspartate. In Pseudomonas aeruginosa (strain ATCC 15692 / DSM 22644 / CIP 104116 / JCM 14847 / LMG 12228 / 1C / PRS 101 / PAO1), this protein is L-glutamate/L-aspartate-binding protein.